Here is a 207-residue protein sequence, read N- to C-terminus: Suppressor of IKBKE 1 (207 aa).

2 coiled-coil regions span residues His-70 to Glu-102 and Gln-162 to Ala-193.

The protein belongs to the SIKE family. Interacts with IKBKE and TBK1 via its coiled coil region. Interaction with TBK1 is disrupted upon viral infection or TLR3 stimulation. Interacts with CDC42BPB. Interacts with SIKE1 which mediates association with the STRIPAK core complex composed of PP2A catalytic and scaffolding subunits, the striatins (PP2A regulatory subunits), the striatin-associated proteins MOB4, STRIP1 and STRIP2, PDCD10 and members of the STE20 kinases, such as STK24 and STK26. Widely expressed. Expressed in brain, heart, skeletal muscle, colon, thymus, spleen, kidney, liver, small intestine, placenta, lung and leukocytes. Present in all cell lines tested (at protein level).

It is found in the cytoplasm. Physiological suppressor of IKK-epsilon and TBK1 that plays an inhibitory role in virus- and TLR3-triggered IRF3. Inhibits TLR3-mediated activation of interferon-stimulated response elements (ISRE) and the IFN-beta promoter. May act by disrupting the interactions of IKBKE or TBK1 with TICAM1/TRIF, IRF3 and RIGI. Does not inhibit NF-kappa-B activation pathways. Associates with the striatin-interacting phosphatase and kinase (STRIPAK) core complex, forming the extended (SIKE1:SLMAP)STRIPAK complex. The (SIKE1:SLMAP)STRIPAK complex dephosphorylates STK3 leading to the inhibition of Hippo signaling and the control of cell growth. This is Suppressor of IKBKE 1 from Homo sapiens (Human).